The primary structure comprises 800 residues: DNA topoisomerase 4 subunit A (800 aa).

Positions 31-495 (LPDVRDGLKP…EIEEIKIDKE (465 aa)) constitute a Topo IIA-type catalytic domain. The O-(5'-phospho-DNA)-tyrosine intermediate role is filled by Tyr-119.

It belongs to the type II topoisomerase GyrA/ParC subunit family. ParC type 2 subfamily. In terms of assembly, heterotetramer composed of ParC and ParE.

Its subcellular location is the cell membrane. It catalyses the reaction ATP-dependent breakage, passage and rejoining of double-stranded DNA.. In terms of biological role, topoisomerase IV is essential for chromosome segregation. It relaxes supercoiled DNA. Performs the decatenation events required during the replication of a circular DNA molecule. The polypeptide is DNA topoisomerase 4 subunit A (Staphylococcus aureus (strain N315)).